We begin with the raw amino-acid sequence, 188 residues long: Capsid protein (188 aa).

Belongs to the tymoviruses capsid protein family.

It is found in the virion. Its function is as follows. Self-assembles to form a T=3 icosahedral capsid composed of 180 copies of the capsid protein. The capsid encapsulates the single-stranded RNA genome. The protein is Capsid protein of Kennedya yellow mosaic virus (strain Jervis bay) (KYMV).